The sequence spans 178 residues: Ribulose bisphosphate carboxylase small subunit, chloroplastic (178 aa).

A chloroplast-targeting transit peptide spans 1-54 (MALISSAAVTTINRAPVQANLATPFTGLKSSAGFPVTKKNNDITSITSNGSRVN).

The protein belongs to the RuBisCO small chain family. As to quaternary structure, heterohexadecamer of 8 large and 8 small subunits.

The protein resides in the plastid. The protein localises to the chloroplast. Functionally, ruBisCO catalyzes two reactions: the carboxylation of D-ribulose 1,5-bisphosphate, the primary event in carbon dioxide fixation, as well as the oxidative fragmentation of the pentose substrate. Both reactions occur simultaneously and in competition at the same active site. Although the small subunit is not catalytic it is essential for maximal activity. In Trifolium repens (Creeping white clover), this protein is Ribulose bisphosphate carboxylase small subunit, chloroplastic.